The sequence spans 60 residues: Conotoxin Cal6.20 (60 aa).

An N-terminal signal peptide occupies residues 1-22 (MKLTCVLIVAVLILTACQVIAA). Cystine bridges form between Cys-32–Cys-42, Cys-35–Cys-48, and Cys-41–Cys-55.

The protein belongs to the conotoxin O1 superfamily. As to expression, expressed by the venom duct.

It is found in the secreted. Probable neurotoxin. This Californiconus californicus (California cone) protein is Conotoxin Cal6.20.